The chain runs to 730 residues: Semaphorin-1A (730 aa).

Residues 1-20 form the signal peptide; sequence MRAALVAVAALLWVALHAAA. Residues 21-630 are Extracellular-facing; it reads WVNDVSPKMY…LPIYTAETLT (610 aa). Residues 28-490 enclose the Sema domain; the sequence is KMYVQFGEER…SDDEILAIKL (463 aa). N-linked (GlcNAc...) asparagine glycans are attached at residues asparagine 44 and asparagine 71. Disulfide bonds link cysteine 97/cysteine 107 and cysteine 125/cysteine 134. N-linked (GlcNAc...) asparagine glycans are attached at residues asparagine 163 and asparagine 267. 2 disulfide bridges follow: cysteine 244/cysteine 358 and cysteine 268/cysteine 317. N-linked (GlcNAc...) asparagine glycosylation occurs at asparagine 360. Intrachain disulfides connect cysteine 493–cysteine 512 and cysteine 504–cysteine 521. A glycan (N-linked (GlcNAc...) asparagine) is linked at asparagine 539. Residues 631 to 651 traverse the membrane as a helical segment; it reads IAIVTSCLGALVVGFISGFLF. Residues 652–730 are Cytoplasmic-facing; it reads SRRCRGEDYT…PIQKVKKTYI (79 aa). The span at 708-720 shows a compositional bias: low complexity; that stretch reads ANGKNANSSAENK. The disordered stretch occupies residues 708 to 730; it reads ANGKNANSSAENKPIQKVKKTYI.

Belongs to the semaphorin family. In terms of tissue distribution, dynamically expressed on a subset of axon pathways in the developing CNS and on circumferential bands of epithelial cells in developing limb buds.

The protein resides in the membrane. Its function is as follows. Plays a role in growth cones guidance. This is Semaphorin-1A (SEMA-1A) from Schistocerca americana (American grasshopper).